A 355-amino-acid chain; its full sequence is UDP-3-O-acylglucosamine N-acyltransferase (355 aa).

The active-site Proton acceptor is the His248.

It belongs to the transferase hexapeptide repeat family. LpxD subfamily. In terms of assembly, homotrimer.

The enzyme catalyses a UDP-3-O-[(3R)-3-hydroxyacyl]-alpha-D-glucosamine + a (3R)-hydroxyacyl-[ACP] = a UDP-2-N,3-O-bis[(3R)-3-hydroxyacyl]-alpha-D-glucosamine + holo-[ACP] + H(+). Its pathway is bacterial outer membrane biogenesis; LPS lipid A biosynthesis. Catalyzes the N-acylation of UDP-3-O-acylglucosamine using 3-hydroxyacyl-ACP as the acyl donor. Is involved in the biosynthesis of lipid A, a phosphorylated glycolipid that anchors the lipopolysaccharide to the outer membrane of the cell. The chain is UDP-3-O-acylglucosamine N-acyltransferase from Syntrophobacter fumaroxidans (strain DSM 10017 / MPOB).